The following is a 229-amino-acid chain: Putative N-acetylmannosamine-6-phosphate 2-epimerase 2 (229 aa).

The protein belongs to the NanE family.

The catalysed reaction is an N-acyl-D-glucosamine 6-phosphate = an N-acyl-D-mannosamine 6-phosphate. It participates in amino-sugar metabolism; N-acetylneuraminate degradation; D-fructose 6-phosphate from N-acetylneuraminate: step 3/5. Its function is as follows. Converts N-acetylmannosamine-6-phosphate (ManNAc-6-P) to N-acetylglucosamine-6-phosphate (GlcNAc-6-P). In Salmonella paratyphi A (strain ATCC 9150 / SARB42), this protein is Putative N-acetylmannosamine-6-phosphate 2-epimerase 2.